Here is a 211-residue protein sequence, read N- to C-terminus: Glutathione S-transferase class-mu 28 kDa isozyme (211 aa).

The GST N-terminal domain occupies 4-86 (DHIKVIYFNG…YMAKKHHMMG (83 aa)). The glutathione site is built by tyrosine 10, arginine 16, tryptophan 41, lysine 45, leucine 53, glutamate 70, serine 71, and aspartate 104. The region spanning 88-211 (TEEEYYNVEK…YLSDRAATPF (124 aa)) is the GST C-terminal domain.

This sequence belongs to the GST superfamily. Mu family. As to quaternary structure, homodimer.

It carries out the reaction RX + glutathione = an S-substituted glutathione + a halide anion + H(+). In terms of biological role, conjugation of reduced glutathione to a wide number of exogenous and endogenous hydrophobic electrophiles. GST isoenzymes appear to play a central role in the parasite detoxification system. Other functions are also suspected including a role in increasing the solubility of haematin in the parasite gut. The chain is Glutathione S-transferase class-mu 28 kDa isozyme from Schistosoma haematobium (Blood fluke).